The primary structure comprises 213 residues: Uridine kinase (213 aa).

15 to 22 is an ATP binding site; the sequence is GASASGKS.

It belongs to the uridine kinase family.

The protein localises to the cytoplasm. The enzyme catalyses uridine + ATP = UMP + ADP + H(+). It carries out the reaction cytidine + ATP = CMP + ADP + H(+). Its pathway is pyrimidine metabolism; CTP biosynthesis via salvage pathway; CTP from cytidine: step 1/3. The protein operates within pyrimidine metabolism; UMP biosynthesis via salvage pathway; UMP from uridine: step 1/1. The polypeptide is Uridine kinase (Salmonella agona (strain SL483)).